Here is a 415-residue protein sequence, read N- to C-terminus: Imidazolonepropionase (415 aa).

His-83 and His-85 together coordinate Fe(3+). His-83 and His-85 together coordinate Zn(2+). Residues Arg-92, Tyr-155, and His-188 each contribute to the 4-imidazolone-5-propanoate site. Residue Tyr-155 coordinates N-formimidoyl-L-glutamate. His-250 contributes to the Fe(3+) binding site. Residue His-250 participates in Zn(2+) binding. Residue Gln-253 coordinates 4-imidazolone-5-propanoate. Asp-324 is a Fe(3+) binding site. Asp-324 contributes to the Zn(2+) binding site. Residues Asn-326 and Gly-328 each coordinate N-formimidoyl-L-glutamate. Ser-329 is a 4-imidazolone-5-propanoate binding site.

It belongs to the metallo-dependent hydrolases superfamily. HutI family. Requires Zn(2+) as cofactor. Fe(3+) is required as a cofactor.

Its subcellular location is the cytoplasm. The enzyme catalyses 4-imidazolone-5-propanoate + H2O = N-formimidoyl-L-glutamate. It participates in amino-acid degradation; L-histidine degradation into L-glutamate; N-formimidoyl-L-glutamate from L-histidine: step 3/3. In terms of biological role, catalyzes the hydrolytic cleavage of the carbon-nitrogen bond in imidazolone-5-propanoate to yield N-formimidoyl-L-glutamate. It is the third step in the universal histidine degradation pathway. This Rubrobacter xylanophilus (strain DSM 9941 / JCM 11954 / NBRC 16129 / PRD-1) protein is Imidazolonepropionase.